A 407-amino-acid chain; its full sequence is Arrestin domain-containing protein 2 (407 aa).

Belongs to the arrestin family. As to quaternary structure, interacts with WWP1 (via WW domains).

This is Arrestin domain-containing protein 2 (ARRDC2) from Homo sapiens (Human).